Consider the following 162-residue polypeptide: Phosphopantetheine adenylyltransferase (162 aa).

Threonine 9 serves as a coordination point for substrate. Residues 9 to 10 and histidine 17 contribute to the ATP site; that span reads TF. Substrate is bound by residues lysine 41, leucine 77, and arginine 91. ATP-binding positions include 92–94, glutamate 102, and 127–133; these read GLR and RQAIASK.

The protein belongs to the bacterial CoaD family. As to quaternary structure, homohexamer. Mg(2+) serves as cofactor.

The protein resides in the cytoplasm. The enzyme catalyses (R)-4'-phosphopantetheine + ATP + H(+) = 3'-dephospho-CoA + diphosphate. It functions in the pathway cofactor biosynthesis; coenzyme A biosynthesis; CoA from (R)-pantothenate: step 4/5. Functionally, reversibly transfers an adenylyl group from ATP to 4'-phosphopantetheine, yielding dephospho-CoA (dPCoA) and pyrophosphate. The protein is Phosphopantetheine adenylyltransferase of Cereibacter sphaeroides (strain ATCC 17025 / ATH 2.4.3) (Rhodobacter sphaeroides).